A 280-amino-acid chain; its full sequence is Ribosomal RNA small subunit methyltransferase A (280 aa).

Asn-28, Leu-30, Gly-55, Glu-77, Asp-103, and Asn-122 together coordinate S-adenosyl-L-methionine.

Belongs to the class I-like SAM-binding methyltransferase superfamily. rRNA adenine N(6)-methyltransferase family. RsmA subfamily.

Its subcellular location is the cytoplasm. The enzyme catalyses adenosine(1518)/adenosine(1519) in 16S rRNA + 4 S-adenosyl-L-methionine = N(6)-dimethyladenosine(1518)/N(6)-dimethyladenosine(1519) in 16S rRNA + 4 S-adenosyl-L-homocysteine + 4 H(+). Specifically dimethylates two adjacent adenosines (A1518 and A1519) in the loop of a conserved hairpin near the 3'-end of 16S rRNA in the 30S particle. May play a critical role in biogenesis of 30S subunits. This chain is Ribosomal RNA small subunit methyltransferase A, found in Roseobacter denitrificans (strain ATCC 33942 / OCh 114) (Erythrobacter sp. (strain OCh 114)).